The following is a 290-amino-acid chain: Pyridoxal 5'-phosphate synthase subunit PdxS (290 aa).

Asp-22 contacts D-ribose 5-phosphate. Lys-79 functions as the Schiff-base intermediate with D-ribose 5-phosphate in the catalytic mechanism. Gly-151 serves as a coordination point for D-ribose 5-phosphate. A D-glyceraldehyde 3-phosphate-binding site is contributed by Arg-163. Residues Gly-212 and 233 to 234 contribute to the D-ribose 5-phosphate site; that span reads GS.

The protein belongs to the PdxS/SNZ family. As to quaternary structure, in the presence of PdxT, forms a dodecamer of heterodimers.

It catalyses the reaction aldehydo-D-ribose 5-phosphate + D-glyceraldehyde 3-phosphate + L-glutamine = pyridoxal 5'-phosphate + L-glutamate + phosphate + 3 H2O + H(+). It participates in cofactor biosynthesis; pyridoxal 5'-phosphate biosynthesis. Functionally, catalyzes the formation of pyridoxal 5'-phosphate from ribose 5-phosphate (RBP), glyceraldehyde 3-phosphate (G3P) and ammonia. The ammonia is provided by the PdxT subunit. Can also use ribulose 5-phosphate and dihydroxyacetone phosphate as substrates, resulting from enzyme-catalyzed isomerization of RBP and G3P, respectively. The chain is Pyridoxal 5'-phosphate synthase subunit PdxS from Clostridium botulinum (strain Langeland / NCTC 10281 / Type F).